The chain runs to 431 residues: UDP-N-acetylmuramate--L-alanine ligase (431 aa).

Residue 108-114 participates in ATP binding; sequence GSHGKTS.

The protein belongs to the MurCDEF family.

Its subcellular location is the cytoplasm. The catalysed reaction is UDP-N-acetyl-alpha-D-muramate + L-alanine + ATP = UDP-N-acetyl-alpha-D-muramoyl-L-alanine + ADP + phosphate + H(+). Its pathway is cell wall biogenesis; peptidoglycan biosynthesis. In terms of biological role, cell wall formation. The polypeptide is UDP-N-acetylmuramate--L-alanine ligase (Macrococcus caseolyticus (strain JCSC5402) (Macrococcoides caseolyticum)).